Consider the following 950-residue polypeptide: Protocadherin alpha-1 (950 aa).

Positions 1–29 (MVFSRRGGLGARDLLLWLLLLAAWEVGSG) are cleaved as a signal peptide. Cadherin domains lie at 30–133 (QLHY…PPVF), 157–242 (AADA…APLF), 243–350 (DQAV…APEL), 351–455 (AVTS…APAF), 456–565 (AQPE…APAL), and 588–678 (GHVV…APKA). Over 30–697 (QLHYSIPEEA…GPEAALVDVN (668 aa)) the chain is Extracellular. N-linked (GlcNAc...) asparagine glycosylation is found at N257 and N265. The N-linked (GlcNAc...) asparagine glycan is linked to N548. The helical transmembrane segment at 698 to 718 (VYLIIAICAVSSLLVLTLLLY) threads the bilayer. The Cytoplasmic segment spans residues 719 to 950 (TALRCSVPPT…GNSTTDNSDQ (232 aa)). 5 PXXP repeats span residues 734–737 (PGKP), 799–802 (PRQP), 832–835 (PGGP), 873–876 (PGNP), and 891–894 (PGSP). The tract at residues 734–894 (PGKPTLVCSS…PDKFIIPGSP (161 aa)) is 5 X 4 AA repeats of P-X-X-P. Disordered stretches follow at residues 752–808 (QQRR…DWRY), 828–856 (LRAGPGGPDQQWPTVSSATPEPEAGEVSP), and 871–890 (YGPGNPKQSGPGELPDKFII). Residues 900-950 (RQEPTNSQIDKSDFITFGKKEETKKKKKKKKGNKTQEKKEKGNSTTDNSDQ) form a disordered region. The span at 909–923 (DKSDFITFGKKEETK) shows a compositional bias: basic and acidic residues.

Its subcellular location is the cell membrane. The protein resides in the secreted. In terms of biological role, potential calcium-dependent cell-adhesion protein. May be involved in the establishment and maintenance of specific neuronal connections in the brain. The chain is Protocadherin alpha-1 (PCDHA1) from Homo sapiens (Human).